A 550-amino-acid polypeptide reads, in one-letter code: CCR4-NOT transcription complex subunit 6-like-A (550 aa).

The required for interaction with cnot1, cnot3 and cnot7 stretch occupies residues 1-148; the sequence is MPKEKYDPPD…LYQEPDGMRK (148 aa). LRR repeat units follow at residues 52 to 73, 75 to 96, 98 to 120, and 121 to 143; these read HLTV…IAKL, NLVY…LGNV, SLRE…GRLF, and RLQT…YQEP. The nuclease domain stretch occupies residues 153–550; sequence MLDNLSVHPE…INGVHLPSRR (398 aa). Residue Glu-235 participates in Mg(2+) binding. The substrate site is built by Glu-235, Glu-271, His-355, and Pro-360. Asp-405 contributes to the Mg(2+) binding site. The active-site Proton donor/acceptor is the Asp-405. Substrate contacts are provided by Asn-407, Asn-474, and Phe-479.

The protein belongs to the CCR4/nocturin family. Component of the CCR4-NOT complex. Requires Mg(2+) as cofactor.

The protein resides in the cytoplasm. It localises to the nucleus. The catalysed reaction is Exonucleolytic cleavage of poly(A) to 5'-AMP.. Poly(A) nuclease with 3'-5' RNase activity. Catalytic component of the CCR4-NOT complex which is one of the major cellular mRNA deadenylases and is linked to various cellular processes including bulk mRNA degradation, miRNA-mediated repression, translational repression during translational initiation and general transcription regulation. Additional complex functions may be a consequence of its influence on mRNA expression. This Xenopus laevis (African clawed frog) protein is CCR4-NOT transcription complex subunit 6-like-A (cnot6l-a).